A 126-amino-acid chain; its full sequence is Fluoride-specific ion channel FluC 1 (126 aa).

Transmembrane regions (helical) follow at residues 5-25, 39-59, 69-89, and 100-120; these read FILAVAAGGSLGSVARYLVGI, TLFINITGSLLIGLFAGLFAI, IFLIVGICGGYTTFSTFSLDS, and AAGAYMIASVVLSVGALIAGI. Residues glycine 77 and threonine 80 each coordinate Na(+).

This sequence belongs to the fluoride channel Fluc/FEX (TC 1.A.43) family.

It localises to the cell inner membrane. It carries out the reaction fluoride(in) = fluoride(out). With respect to regulation, na(+) is not transported, but it plays an essential structural role and its presence is essential for fluoride channel function. Fluoride-specific ion channel. Important for reducing fluoride concentration in the cell, thus reducing its toxicity. The protein is Fluoride-specific ion channel FluC 1 of Nitrobacter hamburgensis (strain DSM 10229 / NCIMB 13809 / X14).